Reading from the N-terminus, the 239-residue chain is Octanoyltransferase (239 aa).

The BPL/LPL catalytic domain maps to glutamate 48–valine 236. Substrate contacts are provided by residues arginine 87 to histidine 94, alanine 167 to glycine 169, and glycine 180 to serine 182. Cysteine 198 serves as the catalytic Acyl-thioester intermediate.

The protein belongs to the LipB family.

It is found in the cytoplasm. It catalyses the reaction octanoyl-[ACP] + L-lysyl-[protein] = N(6)-octanoyl-L-lysyl-[protein] + holo-[ACP] + H(+). It participates in protein modification; protein lipoylation via endogenous pathway; protein N(6)-(lipoyl)lysine from octanoyl-[acyl-carrier-protein]: step 1/2. Its function is as follows. Catalyzes the transfer of endogenously produced octanoic acid from octanoyl-acyl-carrier-protein onto the lipoyl domains of lipoate-dependent enzymes. Lipoyl-ACP can also act as a substrate although octanoyl-ACP is likely to be the physiological substrate. In Rhizobium etli (strain CIAT 652), this protein is Octanoyltransferase.